We begin with the raw amino-acid sequence, 883 residues long: DNA double-strand break repair Rad50 ATPase (883 aa).

Residues R12, 32-38 (NGSGKSS), and Q134 contribute to the ATP site. Residues 218–420 (ELRGELGGLE…EIGSRRGELK (203 aa)) adopt a coiled-coil conformation. The region spanning 395 to 492 (IQKARERKEE…ELVEVEKTLK (98 aa)) is the Zinc-hook domain. Residues C440 and C443 each contribute to the Zn(2+) site. Coiled-coil stretches lie at residues 452–585 (RKEL…KKLG) and 620–741 (EDLL…LLKE). ATP is bound at residue 790 to 795 (FLSGGE).

The protein belongs to the SMC family. RAD50 subfamily. Homodimer. Forms a heterotetramer composed of two Mre11 subunits and two Rad50 subunits. The cofactor is Zn(2+).

In terms of biological role, part of the Rad50/Mre11 complex, which is involved in the early steps of DNA double-strand break (DSB) repair. The complex may facilitate opening of the processed DNA ends to aid in the recruitment of HerA and NurA. Rad50 controls the balance between DNA end bridging and DNA resection via ATP-dependent structural rearrangements of the Rad50/Mre11 complex. The polypeptide is DNA double-strand break repair Rad50 ATPase (Thermococcus kodakarensis (strain ATCC BAA-918 / JCM 12380 / KOD1) (Pyrococcus kodakaraensis (strain KOD1))).